A 440-amino-acid polypeptide reads, in one-letter code: Cytochrome P450 monooygenase 1 (440 aa).

Cysteine 381 is a heme binding site.

Belongs to the cytochrome P450 family. Heme is required as a cofactor.

The protein operates within plant hormone biosynthesis; gibberellin biosynthesis. Its function is as follows. GA14 synthase; part of the gene cluster that mediates the biosynthesis of gibberellins (GAs), diterpenoids that may provide a selective advantage during infection of the preferred host plant, rice. Gibberellins (GAs) are diterpenoids and are synthesized via the mevalonate pathway. Biosynthesis of the major metabolite GA3 (gibberellic acid) from geranylgeranyl diphosphate (GGPP) requires 13 steps. The GGPP produced by the geranylgeranyl diphosphate synthase GGS2 is converted to ent-kaurene via ent-copalyldiphosphate in a two-step cyclization reaction performed by the bifunctional ent-copalyl diphosphate synthase/ent-kaurene synthase enzyme (CPS/KS). Ent-Kaurene is metabolized to GAs by a series of oxidation reactions catalyzed by cytochrome P450 monooxygenases. Cytochrome P450 monooxygenase P450-4 is an ent-kaurene oxidase that catalyzes the three oxidation steps between ent-kaurene and ent-kaurenoic acid. The highly multifunctional cytochrome P450 monooxygenase P450-1 then catalyzes four steps involving oxidation at two carbon atoms, in the main pathway from ent-kaurenoic acid to GA14 via GA12-aldehyde as well as producing kaurenolides and fujenoic acids as by-products. The cytochrome P450 monooxygenase P450-2 then converts GA14 to GA4 by removal of C-20. GA4 is further converted to GA7 by the GA4 desaturase DES via 1,2-desaturation before cytochrome P450 monooxygenase P450-3, a 13-hydroxylase, hydroxylates GA7 to GA3, the final product of the GA-biosynthetic pathway. This Gibberella fujikuroi (strain CBS 195.34 / IMI 58289 / NRRL A-6831) (Bakanae and foot rot disease fungus) protein is Cytochrome P450 monooygenase 1.